We begin with the raw amino-acid sequence, 550 residues long: Carnitine transporter (550 aa).

12 helical membrane passes run 15-35, 53-73, 92-112, 137-157, 196-216, 230-250, 263-283, 317-337, 347-367, 401-421, 451-471, and 477-497; these read FLAV…AIYS, FTTP…GLAF, SWIF…WGFL, VAYS…LASI, MFLL…AVTF, FMTK…SSYV, VCLG…TQFI, WTVF…LFVT, EVIF…FGVF, LLPA…VFLA, LFWC…KAPL, and ATIV…YGLV.

The protein belongs to the BCCT transporter (TC 2.A.15) family.

The protein localises to the cell inner membrane. With respect to regulation, inhibited by the protonophore 3,3',4',5-tetrachlorosalicylanilide (TCS). Not activated by osmolarity. In terms of biological role, catalyzes the energy-dependent uptake of carnitine and is essential for growth on carnitine. Can also mediate the uptake of choline. Is probably a proton:substrate symporter. In Acinetobacter baumannii (strain ATCC 19606 / DSM 30007 / JCM 6841 / CCUG 19606 / CIP 70.34 / NBRC 109757 / NCIMB 12457 / NCTC 12156 / 81), this protein is Carnitine transporter.